The chain runs to 251 residues: Protein PBMUCL2 (251 aa).

The signal sequence occupies residues 1 to 22 (MPRYVPLLLLLLLLRCSERGGG). Disordered regions lie at residues 36 to 55 (WRDG…DRAS) and 65 to 251 (LSQS…THLL). The span at 72 to 87 (KHPETSPKDSRIREND) shows a compositional bias: basic and acidic residues. N120 is a glycosylation site (N-linked (GlcNAc...) asparagine). The span at 150–164 (TKDSVTADPGTTENF) shows a compositional bias: polar residues. Residues 153–251 (SVTADPGTTE…TTKHGDTHLL (99 aa)) are 15 X 11 AA approximate repeats. Residues 241-251 (ETTKHGDTHLL) are compositionally biased toward basic and acidic residues.

As to expression, detected in the brain, lung, spleen, thymus and prostate.

Its subcellular location is the secreted. In Homo sapiens (Human), this protein is Protein PBMUCL2 (HCG22).